A 459-amino-acid polypeptide reads, in one-letter code: Sensor histidine kinase SpaK (459 aa).

The Cytoplasmic portion of the chain corresponds to 1 to 18 (MGIGFKGRKTLLRELVKY). A helical membrane pass occupies residues 19 to 39 (MVTLCISLVVLALLYIFINTI). Over 40 to 155 (AMNTGFSHPA…RKYLPNYELT (116 aa)) the chain is Extracellular. A helical membrane pass occupies residues 156–176 (SICILIILLIIVISIITTYFA). Over 177–459 (NRLRKHFETL…VRVKIPLRNE (283 aa)) the chain is Cytoplasmic. The region spanning 244 to 458 (ALAHEIKIPI…EVRVKIPLRN (215 aa)) is the Histidine kinase domain. Phosphohistidine; by autocatalysis is present on His-247.

It is found in the cell membrane. It carries out the reaction ATP + protein L-histidine = ADP + protein N-phospho-L-histidine.. Its function is as follows. Member of the two-component regulatory system SpaK/SpaR involved in the regulation of the biosynthesis of lantibiotic subtilin. SpaK may function as a membrane-associated protein kinase that phosphorylates SpaR in response to environmental signals. This Bacillus subtilis protein is Sensor histidine kinase SpaK (spaK).